The following is a 373-amino-acid chain: Opsin Rh1 (373 aa).

Over methionine 1–threonine 54 the chain is Extracellular. An N-linked (GlcNAc...) asparagine glycan is attached at asparagine 20. A helical membrane pass occupies residues alanine 55–phenylalanine 75. At alanine 76–asparagine 86 the chain is on the cytoplasmic side. The chain crosses the membrane as a helical span at residues leucine 87 to methionine 107. Over glycine 108 to aspartate 124 the chain is Extracellular. Cysteines 123 and 200 form a disulfide. Residues isoleucine 125–serine 145 traverse the membrane as a helical segment. At leucine 146–threonine 162 the chain is on the cytoplasmic side. A helical transmembrane segment spans residues isoleucine 163 to alanine 183. Residues proline 184 to serine 219 are Extracellular-facing. N-linked (GlcNAc...) asparagine glycosylation occurs at asparagine 196. The helical transmembrane segment at isoleucine 220–alanine 240 threads the bilayer. The Cytoplasmic segment spans residues valine 241–lysine 276. The chain crosses the membrane as a helical span at residues valine 277–cysteine 297. At methionine 298–proline 308 the chain is on the extracellular side. The helical transmembrane segment at leucine 309 to isoleucine 331 threads the bilayer. Lysine 319 is subject to N6-(retinylidene)lysine. Residues serine 332 to alanine 373 are Cytoplasmic-facing. Residues aspartate 354–alanine 373 form a disordered region. Residues serine 358–alanine 373 show a composition bias toward polar residues.

The protein belongs to the G-protein coupled receptor 1 family. Opsin subfamily. Post-translationally, phosphorylated on some or all of the serine and threonine residues present in the C-terminal region.

The protein resides in the cell projection. It localises to the rhabdomere membrane. Its function is as follows. Visual pigments are the light-absorbing molecules that mediate vision. They consist of an apoprotein, opsin, covalently linked to cis-retinal. The sequence is that of Opsin Rh1 (ninaE) from Drosophila pseudoobscura pseudoobscura (Fruit fly).